A 513-amino-acid polypeptide reads, in one-letter code: Homeobox and leucine zipper protein Homez (513 aa).

A DNA-binding region (homeobox 1) is located at residues 31–90 (WTQAVQTSELDGNEHLLQAFSYFPYPSLADIALLCLRHGLQMEKVKTWFMAQRLRCGISW). Glycyl lysine isopeptide (Lys-Gly) (interchain with G-Cter in SUMO2) cross-links involve residues Lys-156, Lys-174, and Lys-176. Disordered stretches follow at residues 200–221 (LSKEQAGGGPDQSCGGGTASWN), 241–287 (SCKE…SFSP), 303–328 (RLRNNSVPSRVGPTEYLSPDMQHQRK), 402–429 (PAISTSSTRSLKEWAKTPPLPAPPPPPD), and 480–513 (LDEEEEEEDEELPEDGEEEEEEEEEEDDDVIIRD). Residues 205–217 (AGGGPDQSCGGGT) show a composition bias toward gly residues. A compositionally biased stretch (low complexity) spans 248-260 (PSGTPPSSSASSP). Phosphoserine is present on Ser-320. 2 DNA-binding regions (homeobox) span residues 324–384 (QHQR…KHGQ) and 418–477 (TPPL…AEVV). The Nuclear localization signal motif lies at 327-332 (RKTKRK). Phosphothreonine is present on Thr-418. Pro residues predominate over residues 419–429 (PPLPAPPPPPD).

As to quaternary structure, homodimer or heterodimer (Potential). Interacts with HOXC8.

The protein localises to the nucleus. Its function is as follows. May function as a transcriptional regulator. This chain is Homeobox and leucine zipper protein Homez (Homez), found in Rattus norvegicus (Rat).